Reading from the N-terminus, the 1509-residue chain is Myosin-2 heavy chain, non muscle (1509 aa).

The region spanning Ser32–Pro85 is the Myosin N-terminal SH3-like domain. The Myosin motor domain maps to Asp89 to Glu787. At Lys133 the chain carries N6,N6,N6-trimethyllysine. Gly182–Thr189 provides a ligand contact to ATP. The interval Ala623–Gly643 is disordered. Actin-binding regions lie at residues Leu660 to Leu682 and Arg766 to Ala780. The IQ domain maps to Ile790 to Ser819. Positions Leu848–Arg1226 are alpha-helical tailpiece (S2). The stretch at Leu848–Glu1509 forms a coiled coil. Composition is skewed to basic and acidic residues over residues Glu958–Leu1019, Lys1034–Leu1047, Glu1097–Lys1107, Lys1115–Val1141, and Gln1179–Glu1189. Disordered regions lie at residues Glu958–Asp1049, Leu1068–Val1141, Ala1170–Ala1195, Ala1213–Gly1259, Val1352–Leu1425, and Gln1474–Glu1509. The tract at residues Arg1227 to Glu1252 is hinge. A compositionally biased stretch (polar residues) spans Thr1231–Leu1240. The interval Glu1253 to Thr1482 is alpha-helical tailpiece (LMM). A light meromyosin (LMM) region spans residues Glu1253–Glu1509. The interval Pro1483–Glu1509 is nonhelical tailpiece. Low complexity predominate over residues Ser1484 to Glu1509. Phosphoserine occurs at positions 1489, 1494, and 1499.

It belongs to the TRAFAC class myosin-kinesin ATPase superfamily. Myosin family. In terms of assembly, myosin II heavy chain is two-headed. It self-assembles into filaments. Hexamer of 2 heavy chain subunits (MHC), 2 alkali light chain subunits (MLC) and 2 regulatory light chain subunits (MLC-2).

In terms of biological role, myosin is a protein that binds to F-actin and has ATPase activity that is activated by F-actin. The chain is Myosin-2 heavy chain, non muscle from Acanthamoeba castellanii (Amoeba).